A 381-amino-acid polypeptide reads, in one-letter code: Glucose-1-phosphate adenylyltransferase (381 aa).

Residues tyrosine 100, glycine 165, 180–181 (EK), and serine 191 each bind alpha-D-glucose 1-phosphate.

It belongs to the bacterial/plant glucose-1-phosphate adenylyltransferase family. Homotetramer.

The enzyme catalyses alpha-D-glucose 1-phosphate + ATP + H(+) = ADP-alpha-D-glucose + diphosphate. It participates in glycan biosynthesis; glycogen biosynthesis. In terms of biological role, involved in the biosynthesis of ADP-glucose, a building block required for the elongation reactions to produce glycogen. Catalyzes the reaction between ATP and alpha-D-glucose 1-phosphate (G1P) to produce pyrophosphate and ADP-Glc. This is Glucose-1-phosphate adenylyltransferase from Mycoplasma mobile (strain ATCC 43663 / 163K / NCTC 11711) (Mesomycoplasma mobile).